The following is a 164-amino-acid chain: Nucleotide-binding protein EF_1165 (164 aa).

It belongs to the YajQ family.

Nucleotide-binding protein. The protein is Nucleotide-binding protein EF_1165 of Enterococcus faecalis (strain ATCC 700802 / V583).